The following is a 212-amino-acid chain: Peptide methionine sulfoxide reductase MsrA (212 aa).

Cys-52 is a catalytic residue.

The protein belongs to the MsrA Met sulfoxide reductase family.

The enzyme catalyses L-methionyl-[protein] + [thioredoxin]-disulfide + H2O = L-methionyl-(S)-S-oxide-[protein] + [thioredoxin]-dithiol. The catalysed reaction is [thioredoxin]-disulfide + L-methionine + H2O = L-methionine (S)-S-oxide + [thioredoxin]-dithiol. Has an important function as a repair enzyme for proteins that have been inactivated by oxidation. Catalyzes the reversible oxidation-reduction of methionine sulfoxide in proteins to methionine. The protein is Peptide methionine sulfoxide reductase MsrA of Shigella boydii serotype 4 (strain Sb227).